A 299-amino-acid polypeptide reads, in one-letter code: MESPPHATASADEMPSIWKEQHAQDAPPGFVPPMGPGEVAAVESLLGYEFRDKALVEEALTHGSFYYPYRPGVTYERLEYLGDAVLTCVVSREVFLTYGQLQPGPLTRLRAANVDKEKLARVAVVHGLHHFLRHKAPNLDGQITDFIEELSMYPIHSNGLLDPPKVLCDVVESLIGAIYCDSNFNQEIVWQVFQKLADPLISLETLGKHPVSELFEFCQKTRRGVKIVKDEWDKNLTVEVLIDGEMVGRATYAQKKEIAQNRAAKAALDKLKETLGQSQTEPMSAEVSEQFNKIDLTGS.

An RNase III domain is found at 39 to 183 (VAAVESLLGY…LIGAIYCDSN (145 aa)). Mg(2+) contacts are provided by Glu79, Asp169, and Glu172. The DRBM domain maps to 209–273 (HPVSELFEFC…AKAALDKLKE (65 aa)). A disordered region spans residues 274-299 (TLGQSQTEPMSAEVSEQFNKIDLTGS). Residues 275–291 (LGQSQTEPMSAEVSEQF) are compositionally biased toward polar residues.

Requires Mg(2+) as cofactor. The cofactor is Mn(2+).

Its function is as follows. Cleaves double-stranded RNA (dsRNA). This Oryza sativa subsp. japonica (Rice) protein is Ribonuclease 3-like protein 3.